Consider the following 645-residue polypeptide: Homeobox protein B-H2 (645 aa).

6 disordered regions span residues 1–50 (MTTM…TTAT), 86–134 (SSGG…QAAL), 149–176 (RERE…AHHP), 240–259 (SHLS…HDER), 265–385 (MLQQ…KART), and 553–645 (GAQQ…ALEV). A compositionally biased stretch (low complexity) spans 18–29 (SAPSATAHHPAA). Residues 106–121 (QHHHHHQQQQQHHHHQ) show a composition bias toward basic residues. The span at 122 to 134 (QQQQQQQHQQAAL) shows a compositional bias: low complexity. Residues 149-165 (REREREREREHYRERHS) are compositionally biased toward basic and acidic residues. Residues 244 to 253 (HQQHHPHLHH) show a composition bias toward basic residues. Over residues 275–316 (NNNNNNNNSSSASNNNNNNNNSASANSNIISGNSSSSNNNNG) the composition is skewed to low complexity. The segment covering 317–328 (SGNGNMLLGGPG) has biased composition (gly residues). Over residues 329-339 (SSISGDQASTI) the composition is skewed to polar residues. A compositionally biased stretch (low complexity) spans 362–377 (SSANGDSSSHLSLSLS). The segment at residues 380 to 439 (QRKARTAFTDHQLQTLEKSFERQKYLSVQDRMELANKLELSDCQVKTWYQNRRTKWKRQT) is a DNA-binding region (homeobox). Low complexity predominate over residues 553–574 (GAQQQQQQPPAASRSPATSQSA). The segment covering 583–592 (TSSSSRQRLI) has biased composition (polar residues). Position 593 is a phosphothreonine (threonine 593). Residues 594-603 (PSPPLNPGSP) are compositionally biased toward pro residues. Serine 595 and serine 602 each carry phosphoserine. A compositionally biased stretch (basic and acidic residues) spans 618-632 (DEERDIERERERERE). Acidic residues predominate over residues 633 to 645 (RDEDDEEELALEV).

It belongs to the Antp homeobox family. As to expression, B-H1 and B-H2 are abundant in the eye-antenna imaginal disk. Expressed in R1 and R6 cells throughout larval stage until 30 hours after puparium formation, at which time expression is seen in the anterior and posterior primary pigment cells. Coexpressed in embryonic glial cells, neurons of the CNS and PNS, most latitudinal anterior cells of the developing notum and the central circular region of the leg and antennal imaginal disk throughout larval development.

The protein localises to the nucleus. B-H1 and B-H2 are regulated by members of the wg signaling pathway; wg and dpp. B-H1 and B-H2 are coexpressed and functionally required in R1 and R6 receptor cells and primary pigment cells for normal eye development. Coexpression is also required for the fate determination of external sensory organs, formation of notal microchaetae, formation of presutural macrochaetae, antennal development and for distal leg morphogenesis; segmentation and specification of tarsal segments 3-5. This Drosophila melanogaster (Fruit fly) protein is Homeobox protein B-H2 (B-H2).